We begin with the raw amino-acid sequence, 499 residues long: Protein singed wings 2 (499 aa).

A signal peptide spans 1–29; that stretch reads MPSGVFQKRPKAAETISLFCMILIRLSRA. LRR repeat units follow at residues 154–175 and 178–199; these read ELHT…TFKR and PLKV…LLLP. Residues 210–265 form the LRRCT 1 domain; the sequence is NPWNCTRNFKWLLLQPEKGRLVVDRDELICTDRKYKERQMLMVMHYKLELKRQCQS. LRR repeat units follow at residues 307-328, 332-353, and 357-378; these read NTTT…RDNP, HVVD…EDTY, and NFRL…ALDN. Residues 394–449 enclose the LRRCT 2 domain; that stretch reads NPWHCTCKFGSRMRELLTKYKDIVRDAWNVSCTYRLDDDQLLAKVLTLSRQEMCNL.

Its function is as follows. Has a role in the ecdysone induced cascade; probably indirect control of 'late' ecdysone genes. This is Protein singed wings 2 from Drosophila melanogaster (Fruit fly).